We begin with the raw amino-acid sequence, 200 residues long: Pyridoxal phosphate homeostasis protein (200 aa).

N6-(pyridoxal phosphate)lysine is present on lysine 11.

It belongs to the pyridoxal phosphate-binding protein YggS/PROSC family. In terms of assembly, monomer.

In terms of biological role, pyridoxal 5'-phosphate (PLP)-binding protein, which is involved in PLP homeostasis. The protein is Pyridoxal phosphate homeostasis protein of Buchnera aphidicola subsp. Acyrthosiphon pisum (strain APS) (Acyrthosiphon pisum symbiotic bacterium).